A 64-amino-acid chain; its full sequence is MPKLKTHSGAAKRFKKTATGKVKRSKAFKRHILTSKSTKKKRHFDMEGLVSKADTPKIKRMIPY.

The segment at 1-25 (MPKLKTHSGAAKRFKKTATGKVKRS) is disordered.

Belongs to the bacterial ribosomal protein bL35 family.

The chain is Large ribosomal subunit protein bL35 from Koribacter versatilis (strain Ellin345).